We begin with the raw amino-acid sequence, 327 residues long: Sphingomyelin synthase-related 2 (327 aa).

The next 5 helical transmembrane spans lie at 54 to 74 (LLAT…LAWV), 99 to 119 (AIRI…LVMF), 131 to 151 (VFFC…IFQV), 192 to 212 (LCGD…FLVF), and 220 to 240 (LQPL…SILL). The active site involves His201. Topologically, residues 241 to 327 (ARKHYMIDIV…TLKKSRRSFE (87 aa)) are cytoplasmic. Catalysis depends on residues His244 and Asp248.

This sequence belongs to the sphingomyelin synthase family.

It localises to the membrane. This Caenorhabditis elegans protein is Sphingomyelin synthase-related 2.